Reading from the N-terminus, the 129-residue chain is Small ribosomal subunit protein uS8 (129 aa).

Belongs to the universal ribosomal protein uS8 family. In terms of assembly, part of the 30S ribosomal subunit.

One of the primary rRNA binding proteins, it binds directly to 16S rRNA central domain where it helps coordinate assembly of the platform of the 30S subunit. This is Small ribosomal subunit protein uS8 from Archaeoglobus fulgidus (strain ATCC 49558 / DSM 4304 / JCM 9628 / NBRC 100126 / VC-16).